Here is a 191-residue protein sequence, read N- to C-terminus: Octanoyltransferase (191 aa).

In terms of domain architecture, BPL/LPL catalytic spans Glu-10–Pro-185. Substrate contacts are provided by residues Arg-49 to His-56, Ser-116 to Gly-118, and Gly-129 to Ala-131. The active-site Acyl-thioester intermediate is Cys-147.

The protein belongs to the LipB family.

The protein resides in the cytoplasm. The enzyme catalyses octanoyl-[ACP] + L-lysyl-[protein] = N(6)-octanoyl-L-lysyl-[protein] + holo-[ACP] + H(+). It participates in protein modification; protein lipoylation via endogenous pathway; protein N(6)-(lipoyl)lysine from octanoyl-[acyl-carrier-protein]: step 1/2. Its function is as follows. Catalyzes the transfer of endogenously produced octanoic acid from octanoyl-acyl-carrier-protein onto the lipoyl domains of lipoate-dependent enzymes. Lipoyl-ACP can also act as a substrate although octanoyl-ACP is likely to be the physiological substrate. The chain is Octanoyltransferase from Salmonella choleraesuis (strain SC-B67).